Reading from the N-terminus, the 475-residue chain is Ribulose bisphosphate carboxylase large chain (475 aa).

The propeptide occupies 1–2; the sequence is MS. N-acetylproline is present on P3. At K14 the chain carries N6,N6,N6-trimethyllysine. Substrate is bound by residues N123 and T173. Residue K175 is the Proton acceptor of the active site. Residue K177 participates in substrate binding. Mg(2+)-binding residues include K201, D203, and E204. N6-carboxylysine is present on K201. H294 serves as the catalytic Proton acceptor. Residues R295, H327, and S379 each contribute to the substrate site.

The protein belongs to the RuBisCO large chain family. Type I subfamily. As to quaternary structure, heterohexadecamer of 8 large chains and 8 small chains; disulfide-linked. The disulfide link is formed within the large subunit homodimers. Mg(2+) serves as cofactor. The disulfide bond which can form in the large chain dimeric partners within the hexadecamer appears to be associated with oxidative stress and protein turnover.

It is found in the plastid. Its subcellular location is the chloroplast. It carries out the reaction 2 (2R)-3-phosphoglycerate + 2 H(+) = D-ribulose 1,5-bisphosphate + CO2 + H2O. The enzyme catalyses D-ribulose 1,5-bisphosphate + O2 = 2-phosphoglycolate + (2R)-3-phosphoglycerate + 2 H(+). RuBisCO catalyzes two reactions: the carboxylation of D-ribulose 1,5-bisphosphate, the primary event in carbon dioxide fixation, as well as the oxidative fragmentation of the pentose substrate in the photorespiration process. Both reactions occur simultaneously and in competition at the same active site. The polypeptide is Ribulose bisphosphate carboxylase large chain (Illicium oligandrum (Star anise)).